The following is a 643-amino-acid chain: Fructose-1,6-bisphosphatase class 3 (643 aa).

The protein belongs to the FBPase class 3 family. Mn(2+) serves as cofactor.

The enzyme catalyses beta-D-fructose 1,6-bisphosphate + H2O = beta-D-fructose 6-phosphate + phosphate. It functions in the pathway carbohydrate biosynthesis; gluconeogenesis. This is Fructose-1,6-bisphosphatase class 3 from Lacticaseibacillus casei (strain BL23) (Lactobacillus casei).